The sequence spans 107 residues: Nucleoid-associated protein Pnec_0645 (107 aa).

It belongs to the YbaB/EbfC family. As to quaternary structure, homodimer.

The protein resides in the cytoplasm. Its subcellular location is the nucleoid. Binds to DNA and alters its conformation. May be involved in regulation of gene expression, nucleoid organization and DNA protection. The sequence is that of Nucleoid-associated protein Pnec_0645 from Polynucleobacter necessarius subsp. necessarius (strain STIR1).